The chain runs to 244 residues: Adenosylcobinamide-GDP ribazoletransferase (244 aa).

5 helical membrane-spanning segments follow: residues 31-51, 55-75, 109-129, 133-153, and 188-208; these read LLCY…ASHL, APAP…SGAL, IAVV…WVLV, AGAL…GLFL, and LLLG…VFLW.

The protein belongs to the CobS family. The cofactor is Mg(2+).

The protein localises to the cell inner membrane. The catalysed reaction is alpha-ribazole + adenosylcob(III)inamide-GDP = adenosylcob(III)alamin + GMP + H(+). It carries out the reaction alpha-ribazole 5'-phosphate + adenosylcob(III)inamide-GDP = adenosylcob(III)alamin 5'-phosphate + GMP + H(+). The protein operates within cofactor biosynthesis; adenosylcobalamin biosynthesis; adenosylcobalamin from cob(II)yrinate a,c-diamide: step 7/7. Joins adenosylcobinamide-GDP and alpha-ribazole to generate adenosylcobalamin (Ado-cobalamin). Also synthesizes adenosylcobalamin 5'-phosphate from adenosylcobinamide-GDP and alpha-ribazole 5'-phosphate. The sequence is that of Adenosylcobinamide-GDP ribazoletransferase from Pseudomonas putida (strain W619).